A 224-amino-acid polypeptide reads, in one-letter code: UPF0173 metal-dependent hydrolase TK0141 (224 aa).

This sequence belongs to the UPF0173 family.

This Thermococcus kodakarensis (strain ATCC BAA-918 / JCM 12380 / KOD1) (Pyrococcus kodakaraensis (strain KOD1)) protein is UPF0173 metal-dependent hydrolase TK0141.